The following is a 267-amino-acid chain: 4-hydroxy-tetrahydrodipicolinate reductase (267 aa).

Position 10–15 (10–15 (GANGRM)) interacts with NAD(+). R37 provides a ligand contact to NADP(+). NAD(+)-binding positions include 98 to 100 (GTT) and 122 to 125 (ARNY). The Proton donor/acceptor role is filled by H155. (S)-2,3,4,5-tetrahydrodipicolinate is bound at residue H156. K159 acts as the Proton donor in catalysis. Residue 165–166 (GT) participates in (S)-2,3,4,5-tetrahydrodipicolinate binding.

Belongs to the DapB family.

It is found in the cytoplasm. It carries out the reaction (S)-2,3,4,5-tetrahydrodipicolinate + NAD(+) + H2O = (2S,4S)-4-hydroxy-2,3,4,5-tetrahydrodipicolinate + NADH + H(+). The enzyme catalyses (S)-2,3,4,5-tetrahydrodipicolinate + NADP(+) + H2O = (2S,4S)-4-hydroxy-2,3,4,5-tetrahydrodipicolinate + NADPH + H(+). It functions in the pathway amino-acid biosynthesis; L-lysine biosynthesis via DAP pathway; (S)-tetrahydrodipicolinate from L-aspartate: step 4/4. Functionally, catalyzes the conversion of 4-hydroxy-tetrahydrodipicolinate (HTPA) to tetrahydrodipicolinate. The protein is 4-hydroxy-tetrahydrodipicolinate reductase of Pseudoalteromonas translucida (strain TAC 125).